Consider the following 283-residue polypeptide: MKQYLELCRRIVSEGEWVANERTGKRCLTVINADLEYDVANNQFPLITTRKSYWKAAIAEFLGYIRGYDNAADFRELGTKTWDANANENAAWLANPHRRGVDDMGRVYGVQGRAWRKPNGETIDQLRKIVNNLTKGIDDRGEILTFFNPGEFDLGCLRPCMHTHTFSLVGDTLHLTSYQRSCDVPLGLNFNQIQVFTFLALMAQITGKKAGKAYHKIVNAHIYEDQLELMRDVQLKREPFPLPKLEINPDIKTLEDLETWVTMDDFKVVGYQSHEPIKYPFSV.

Position 22 (Arg22) interacts with dUMP. Cys160 (nucleophile) is an active-site residue. DUMP is bound by residues 180 to 183 (RSCD), Asn191, and 221 to 223 (HIY). Asp183 lines the (6R)-5,10-methylene-5,6,7,8-tetrahydrofolate pocket. Position 282 (Ser282) interacts with (6R)-5,10-methylene-5,6,7,8-tetrahydrofolate.

The protein belongs to the thymidylate synthase family. Bacterial-type ThyA subfamily. As to quaternary structure, homodimer.

It is found in the cytoplasm. The enzyme catalyses dUMP + (6R)-5,10-methylene-5,6,7,8-tetrahydrofolate = 7,8-dihydrofolate + dTMP. It participates in pyrimidine metabolism; dTTP biosynthesis. Catalyzes the reductive methylation of 2'-deoxyuridine-5'-monophosphate (dUMP) to 2'-deoxythymidine-5'-monophosphate (dTMP) while utilizing 5,10-methylenetetrahydrofolate (mTHF) as the methyl donor and reductant in the reaction, yielding dihydrofolate (DHF) as a by-product. This enzymatic reaction provides an intracellular de novo source of dTMP, an essential precursor for DNA biosynthesis. In Haemophilus influenzae (strain PittGG), this protein is Thymidylate synthase.